Consider the following 349-residue polypeptide: Quinolinate synthase (349 aa).

Residues histidine 52 and serine 69 each contribute to the iminosuccinate site. [4Fe-4S] cluster is bound at residue cysteine 114. Iminosuccinate contacts are provided by residues 140-142 (YVN) and serine 157. A [4Fe-4S] cluster-binding site is contributed by cysteine 201. Iminosuccinate contacts are provided by residues 227–229 (HPE) and threonine 255. Cysteine 300 lines the [4Fe-4S] cluster pocket.

This sequence belongs to the quinolinate synthase family. Type 2 subfamily. [4Fe-4S] cluster serves as cofactor.

Its subcellular location is the cytoplasm. It carries out the reaction iminosuccinate + dihydroxyacetone phosphate = quinolinate + phosphate + 2 H2O + H(+). It functions in the pathway cofactor biosynthesis; NAD(+) biosynthesis; quinolinate from iminoaspartate: step 1/1. Catalyzes the condensation of iminoaspartate with dihydroxyacetone phosphate to form quinolinate. This is Quinolinate synthase from Mycobacterium bovis (strain BCG / Tokyo 172 / ATCC 35737 / TMC 1019).